The chain runs to 131 residues: Actin-associated protein FAM107A (131 aa).

The stretch at 57 to 77 (VLEHRRRNQLIKKKEEELEAK) forms a coiled coil. A Nuclear localization signal motif is present at residues 61 to 71 (RRRNQLIKKKE).

As to quaternary structure, interacts with ACTB. Interacts with COMMD1; this interaction stabilizes COMMD1 in the nucleus. Interacts with MAP1A. Interacts with PRDX1. Interacts with F-actin.

The protein resides in the nucleus. The protein localises to the cytoplasm. Its subcellular location is the cytoskeleton. It is found in the stress fiber. It localises to the cell junction. The protein resides in the focal adhesion. The protein localises to the cell projection. Its subcellular location is the ruffle membrane. It is found in the synapse. Functionally, stress-inducible actin-binding protein that plays a role in synaptic and cognitive functions by modulating actin filamentous (F-actin) dynamics. Mediates polymerization of globular actin to F-actin. Also binds to, stabilizes and bundles F-actin. Involved in synaptic function by regulating neurite outgrowth in an actin-dependent manner and for the acquisition of hippocampus-dependent cognitive function, such as learning and long-term memory. Plays a role in the actin and microtubule cytoskeleton organization; negatively regulates focal adhesion (FA) assembly promoting malignant glial cell migration in an actin-, microtubule- and MAP1A-dependent manner. Also involved in neuroblastoma G1/S phase cell cycle progression and cell proliferation inhibition by stimulating ubiquitination of NF-kappa-B subunit RELA and NF-kappa-B degradation in a COMMD1- and actin-dependent manner. May play a role in tumor development. The polypeptide is Actin-associated protein FAM107A (Rattus norvegicus (Rat)).